The sequence spans 181 residues: Acireductone dioxygenase (181 aa).

Fe(2+) is bound by residues His97, His99, Glu103, and His141. His97, His99, Glu103, and His141 together coordinate Ni(2+).

It belongs to the acireductone dioxygenase (ARD) family. Monomer. The cofactor is Fe(2+). Requires Ni(2+) as cofactor.

The catalysed reaction is 1,2-dihydroxy-5-(methylsulfanyl)pent-1-en-3-one + O2 = 3-(methylsulfanyl)propanoate + CO + formate + 2 H(+). The enzyme catalyses 1,2-dihydroxy-5-(methylsulfanyl)pent-1-en-3-one + O2 = 4-methylsulfanyl-2-oxobutanoate + formate + 2 H(+). It functions in the pathway amino-acid biosynthesis; L-methionine biosynthesis via salvage pathway; L-methionine from S-methyl-5-thio-alpha-D-ribose 1-phosphate: step 5/6. Its function is as follows. Catalyzes 2 different reactions between oxygen and the acireductone 1,2-dihydroxy-3-keto-5-methylthiopentene (DHK-MTPene) depending upon the metal bound in the active site. Fe-containing acireductone dioxygenase (Fe-ARD) produces formate and 2-keto-4-methylthiobutyrate (KMTB), the alpha-ketoacid precursor of methionine in the methionine recycle pathway. Ni-containing acireductone dioxygenase (Ni-ARD) produces methylthiopropionate, carbon monoxide and formate, and does not lie on the methionine recycle pathway. The chain is Acireductone dioxygenase from Stutzerimonas stutzeri (strain A1501) (Pseudomonas stutzeri).